We begin with the raw amino-acid sequence, 130 residues long: Small ribosomal subunit protein uS12c (130 aa).

The protein belongs to the universal ribosomal protein uS12 family. Part of the 30S ribosomal subunit.

It localises to the plastid. It is found in the chloroplast. In terms of biological role, with S4 and S5 plays an important role in translational accuracy. Located at the interface of the 30S and 50S subunits. This Tetradesmus obliquus (Green alga) protein is Small ribosomal subunit protein uS12c (rps12).